A 129-amino-acid polypeptide reads, in one-letter code: Large ribosomal subunit protein bL20 (129 aa).

The protein belongs to the bacterial ribosomal protein bL20 family.

Its function is as follows. Binds directly to 23S ribosomal RNA and is necessary for the in vitro assembly process of the 50S ribosomal subunit. It is not involved in the protein synthesizing functions of that subunit. The chain is Large ribosomal subunit protein bL20 from Mycolicibacterium smegmatis (strain ATCC 700084 / mc(2)155) (Mycobacterium smegmatis).